The sequence spans 212 residues: Interleukin-6 (212 aa).

The first 29 residues, 1–29 (MNSLSTSAFSPVAFSLGLLLVMATAFPTP), serve as a signal peptide directing secretion. Residues Cys-72 and Cys-78 are joined by a disulfide bond. A Phosphoserine modification is found at Ser-81. Cys-101 and Cys-111 are joined by a disulfide. The interval 156-175 (QKGKNPDKATTPNPTTNAGL) is disordered. The segment covering 163-175 (KATTPNPTTNAGL) has biased composition (polar residues).

This sequence belongs to the IL-6 superfamily. In terms of assembly, component of a hexamer of two molecules each of IL6, IL6R and IL6ST; first binds to IL6R to associate with the signaling subunit IL6ST. Interacts with IL6R (via the N-terminal ectodomain); this interaction may be affected by IL6R-binding with SORL1, hence decreasing IL6 cis signaling. Interacts with SORL1 (via the N-terminal ectodomain); this interaction leads to IL6 internalization and lysosomal degradation. May form a trimeric complex with the soluble SORL1 ectodomain and soluble IL6R receptor; this interaction might stabilize circulating IL6, hence promoting IL6 trans signaling.

Its subcellular location is the secreted. Cytokine with a wide variety of biological functions in immunity, tissue regeneration, and metabolism. Binds to IL6R, then the complex associates to the signaling subunit IL6ST/gp130 to trigger the intracellular IL6-signaling pathway. The interaction with the membrane-bound IL6R and IL6ST stimulates 'classic signaling', whereas the binding of IL6 and soluble IL6R to IL6ST stimulates 'trans-signaling'. Alternatively, 'cluster signaling' occurs when membrane-bound IL6:IL6R complexes on transmitter cells activate IL6ST receptors on neighboring receiver cells. Its function is as follows. IL6 is a potent inducer of the acute phase response. Rapid production of IL6 contributes to host defense during infection and tissue injury, but excessive IL6 synthesis is involved in disease pathology. In the innate immune response, is synthesized by myeloid cells, such as macrophages and dendritic cells, upon recognition of pathogens through toll-like receptors (TLRs) at the site of infection or tissue injury. In the adaptive immune response, is required for the differentiation of B cells into immunoglobulin-secreting cells. Plays a major role in the differentiation of CD4(+) T cell subsets. Essential factor for the development of T follicular helper (Tfh) cells that are required for the induction of germinal-center formation. Required to drive naive CD4(+) T cells to the Th17 lineage. Also required for proliferation of myeloma cells and the survival of plasmablast cells. In terms of biological role, acts as an essential factor in bone homeostasis and on vessels directly or indirectly by induction of VEGF, resulting in increased angiogenesis activity and vascular permeability. Induces, through 'trans-signaling' and synergistically with IL1B and TNF, the production of VEGF. Involved in metabolic controls, is discharged into the bloodstream after muscle contraction increasing lipolysis and improving insulin resistance. 'Trans-signaling' in central nervous system also regulates energy and glucose homeostasis. Mediates, through GLP-1, crosstalk between insulin-sensitive tissues, intestinal L cells and pancreatic islets to adapt to changes in insulin demand. Also acts as a myokine. Plays a protective role during liver injury, being required for maintenance of tissue regeneration. Also has a pivotal role in iron metabolism by regulating HAMP/hepcidin expression upon inflammation or bacterial infection. Through activation of IL6ST-YAP-NOTCH pathway, induces inflammation-induced epithelial regeneration. The sequence is that of Interleukin-6 (IL6) from Sus scrofa (Pig).